Consider the following 166-residue polypeptide: Sperm-egg fusion protein TMEM95 (166 aa).

An N-terminal signal peptide occupies residues 1–16 (MWTLALGGIFLAAVEA). Intrachain disulfides connect C17–C118, C20–C121, C105–C128, and C109–C134. The Extracellular portion of the chain corresponds to 17–145 (CVFCRFPDRE…PGSHDLWEAR (129 aa)). N117 carries an N-linked (GlcNAc...) asparagine glycan. The chain crosses the membrane as a helical span at residues 146–165 (ILLLFVCGTALLLGVPSLAV). A topological domain (cytoplasmic) is located at residue E166.

Belongs to the TMEM95 family. As to quaternary structure, does not interact with sperm-egg fusion proteins IZUMO1 or IZUMO1R/JUNO. Post-translationally, N-glycosylated. As to expression, detected in testis and brain with higher levels in brain than testis.

It localises to the cytoplasmic vesicle. Its subcellular location is the secretory vesicle. The protein resides in the acrosome membrane. Functionally, sperm protein required for fusion of sperm with the egg membrane during fertilization. This chain is Sperm-egg fusion protein TMEM95, found in Bos taurus (Bovine).